A 250-amino-acid polypeptide reads, in one-letter code: 5-oxoprolinase subunit A 2 (250 aa).

This sequence belongs to the LamB/PxpA family. In terms of assembly, forms a complex composed of PxpA, PxpB and PxpC.

The catalysed reaction is 5-oxo-L-proline + ATP + 2 H2O = L-glutamate + ADP + phosphate + H(+). In terms of biological role, catalyzes the cleavage of 5-oxoproline to form L-glutamate coupled to the hydrolysis of ATP to ADP and inorganic phosphate. In Bordetella bronchiseptica (strain ATCC BAA-588 / NCTC 13252 / RB50) (Alcaligenes bronchisepticus), this protein is 5-oxoprolinase subunit A 2.